Reading from the N-terminus, the 342-residue chain is MSAFTPASEVLLRHSDDFEQSRILFAGDLQDDLPARFECAASRAYTQQFHHWQALSRQMGDNVRFSLVAQASDVADCDTLIYYWPKNKPEAQFQLMNILSLMPVGSDVFVVGENRSGVRSAEPMLADYAPLNKVDSARRCGLYHGRLEKQPQFSLESWWAEYNIDGLTIKTLPGVFSRDGLDVGSQLLLSTLTPHTKGKVLDVGCGAGVLSAALASHSPKVRLTLCDVSAPAVEASRATLAANGLEGEVFASNVFSEVKGRFDMIISNPPFHDGMQTSLDAAQTLIRGAVRHLNSGGELRIVANAFLPYPKILDETFGFHEVIAQTGRFKVYRTVMTRQAKK.

This sequence belongs to the methyltransferase superfamily. RsmC family. Monomer.

The protein resides in the cytoplasm. It catalyses the reaction guanosine(1207) in 16S rRNA + S-adenosyl-L-methionine = N(2)-methylguanosine(1207) in 16S rRNA + S-adenosyl-L-homocysteine + H(+). Functionally, specifically methylates the guanine in position 1207 of 16S rRNA in the 30S particle. The chain is Ribosomal RNA small subunit methyltransferase C from Salmonella agona (strain SL483).